Reading from the N-terminus, the 111-residue chain is ATP-dependent Clp protease adapter protein ClpS (111 aa).

It belongs to the ClpS family. Binds to the N-terminal domain of the chaperone ClpA.

Its function is as follows. Involved in the modulation of the specificity of the ClpAP-mediated ATP-dependent protein degradation. The polypeptide is ATP-dependent Clp protease adapter protein ClpS (Legionella pneumophila (strain Corby)).